Here is a 355-residue protein sequence, read N- to C-terminus: Methylthioribose-1-phosphate isomerase (355 aa).

Residues 47–49 (RGA), Arg-91, and Gln-199 contribute to the substrate site. The Proton donor role is filled by Asp-240. A substrate-binding site is contributed by 250 to 251 (NK).

This sequence belongs to the eIF-2B alpha/beta/delta subunits family. MtnA subfamily.

It carries out the reaction 5-(methylsulfanyl)-alpha-D-ribose 1-phosphate = 5-(methylsulfanyl)-D-ribulose 1-phosphate. It participates in amino-acid biosynthesis; L-methionine biosynthesis via salvage pathway; L-methionine from S-methyl-5-thio-alpha-D-ribose 1-phosphate: step 1/6. In terms of biological role, catalyzes the interconversion of methylthioribose-1-phosphate (MTR-1-P) into methylthioribulose-1-phosphate (MTRu-1-P). The polypeptide is Methylthioribose-1-phosphate isomerase (Oleidesulfovibrio alaskensis (strain ATCC BAA-1058 / DSM 17464 / G20) (Desulfovibrio alaskensis)).